The chain runs to 337 residues: MKRPCEETTSESDMDETIDVGSENNYSGQSTSSVIRLNSPTTTSQIMARKKRRGIIEKRRRDRINNSLSELRRLVPTAFEKQGSAKLEKAEILQMTVDHLKMLQATGGKGYFDAHALAMDFMSIGFRECLTEVARYLSSVEGLDSSDPLRVRLVSHLSTCATQREAAAMTSSMAHHHHPLHPHHWAAAFHHLPAALLQPNGLHASESTPCRLSTTSEVPPAHGSALLTATFAHADSALRMPSTGSVAPCVPPLSTSLLSLSATVHAAAAAATAAAHSFPLSFAGAFPMLPPNAAAAVAAATAISPPLSVSATSSPQQTSSGTNNKPYRPWGTEVGAF.

The segment at methionine 1–arginine 52 is disordered. A compositionally biased stretch (acidic residues) spans threonine 8–isoleucine 18. The segment covering serine 22–isoleucine 46 has biased composition (polar residues). The tract at residues methionine 47–alanine 116 is transcriptional repression and interaction with NCOR1 and SIN3A. A bHLH domain is found at alanine 48–leucine 103. The 36-residue stretch at methionine 122–leucine 157 folds into the Orange domain. The span at leucine 307–lysine 325 shows a compositional bias: polar residues. The disordered stretch occupies residues leucine 307–phenylalanine 337. Residues tyrosine 327–tryptophan 330 carry the YRPW motif motif.

This sequence belongs to the HEY family. As to quaternary structure, may self-associate. Interacts with GATA4, HES1 and HEYL. Interacts with HDAC1, NCOR1 and SIN3A. Interacts with ARNT and GATA6.

The protein localises to the nucleus. Its function is as follows. Downstream effector of Notch signaling which may be required for cardiovascular development. Transcriptional repressor which binds preferentially to the canonical E box sequence 5'-CACGTG-3'. Represses transcription by the cardiac transcriptional activators GATA4 and GATA6. The protein is Hairy/enhancer-of-split related with YRPW motif protein 2 (HEY2) of Homo sapiens (Human).